The primary structure comprises 170 residues: Bifunctional protein PyrR (170 aa).

Residues leucine 90–threonine 102 carry the PRPP-binding motif.

It belongs to the purine/pyrimidine phosphoribosyltransferase family. PyrR subfamily.

The catalysed reaction is UMP + diphosphate = 5-phospho-alpha-D-ribose 1-diphosphate + uracil. Functionally, regulates the transcription of the pyrimidine nucleotide (pyr) operon in response to exogenous pyrimidines. In terms of biological role, also displays a weak uracil phosphoribosyltransferase activity which is not physiologically significant. This Pseudomonas savastanoi pv. phaseolicola (strain 1448A / Race 6) (Pseudomonas syringae pv. phaseolicola (strain 1448A / Race 6)) protein is Bifunctional protein PyrR.